The primary structure comprises 581 residues: MAPSTPLLTVRGSEGLYMVNGPPHFTESTVLPRESGRNCKVYTFSKDGTLFAWSNGEKVNIINVANKGLLHSFDLPKAVCLEFSPNNTVLATWQPYTTSKDGTAGTPNLQLYDMKTGACLKSFIQKKMQNWCPSWSDDEIICARNVNNEVHFFENNNFNTIANKLHLQKVNDFNLSPGTQPYKVAVYVPGSKGAPSFVRLYQYPNFAGPQAALANKSFFKADKVTMLWNKKATAVLVIASTEVDKTGASYYGEQTLHYIATNGESAVVQLPKNGPIYDVVWNSSSTEFCAVYGFMPAKATVFNLKCDPVFDFGTGPRNAAFYSPHGHILVLAGFGNLRGQMEVWDVKNYKLISKPVASDSTYFAWCPDGEHILTATCAPRLRVNNGYKIWHYTGSLLHKYDVPSNGELWQVSWQPFLDGIFPAKTIKYQAVPSEVPSEEPKVATAYRPPALRNKPVTNSKLHEEEPPQNMKPHPGSDKPLSKTALKNQRKHEAKKAAKQEARSDAAPTPVPQSAPRNTVTQSASGDPEVDKKIKNLKKKLKAIEQLKEQAAAGKQLEKNQLEKIQKETALLQELEDLELGV.

Position 1 is an N-acetylmethionine (M1). Position 2 is an N-acetylalanine; in Eukaryotic translation initiation factor 2A, N-terminally processed (A2). T5 carries the post-translational modification Phosphothreonine. 3 WD repeats span residues 23–63 (PHFT…NIIN), 125–163 (QKKM…TIAN), and 356–401 (VASD…HKYD). Residues 432–533 (PSEVPSEEPK…SGDPEVDKKI (102 aa)) form a disordered region. Basic and acidic residues predominate over residues 494–503 (KKAAKQEARS). Phosphoserine occurs at positions 503, 513, and 522. The segment covering 514-524 (APRNTVTQSAS) has biased composition (polar residues). A coiled-coil region spans residues 527-578 (PEVDKKIKNLKKKLKAIEQLKEQAAAGKQLEKNQLEKIQKETALLQELEDLE).

This sequence belongs to the WD repeat EIF2A family.

Functions in the early steps of protein synthesis of a small number of specific mRNAs. Acts by directing the binding of methionyl-tRNAi to 40S ribosomal subunits. In contrast to the eIF-2 complex, it binds methionyl-tRNAi to 40S subunits in a codon-dependent manner, whereas the eIF-2 complex binds methionyl-tRNAi to 40S subunits in a GTP-dependent manner. This chain is Eukaryotic translation initiation factor 2A (Eif2a), found in Mus musculus (Mouse).